The primary structure comprises 440 residues: Streptokinase A (440 aa).

The N-terminal stretch at 1–26 (MKNYLSIGVIALLFALTFGTVKSVQA) is a signal peptide.

In terms of biological role, this protein is not a protease, but it activates plasminogen by complexing with it. As a potential virulence factor, it is thought to prevent the formation of effective fibrin barriers around the site of infection, thereby contributing to the invasiveness of the cells. This is Streptokinase A (ska) from Streptococcus pyogenes serotype M1.